The sequence spans 174 residues: MTSQLEKEAREWIEETLHTKLNAQLDLLDQLQSGVILCRICKEALGANIRYKESNMPFVQMENISAFINYAQQVVHVPSQDMFQTSDLFERRNDEQVLRSIHSFSRYAAKMFPGKVRGLGPKLAEKKPRVFSAQQQREFREGVNSLQYGSFDMPTQGTEKIAFSRRRDPTGNMY.

The 107-residue stretch at 3 to 109 folds into the Calponin-homology (CH) domain; that stretch reads SQLEKEAREW…SIHSFSRYAA (107 aa).

Binds to actin.

It is found in the cytoplasm. In terms of biological role, has actin-binding and actin-bundling activity and is a component of the actin patch. Stabilizes actin filaments against disassembly. Cross-links F-actin and is required for the formation of the contractile F-actin ring. This Schizosaccharomyces pombe (strain 972 / ATCC 24843) (Fission yeast) protein is Transgelin (stg1).